Reading from the N-terminus, the 859-residue chain is Envelope glycoprotein (859 aa).

Residues 1 to 6 (MVSIAF) constitute a propeptide that is removed on maturation. Topologically, residues 7-614 (YGGIPGGIST…KDLWSHIGNW (608 aa)) are extracellular. N-linked (GlcNAc...) asparagine; by host glycosylation is found at Asn-40, Asn-112, Asn-141, Asn-148, Asn-186, Asn-214, Asn-233, Asn-244, Asn-340, Asn-368, Asn-399, Asn-406, and Asn-411. The segment at 446–466 (FGISAIVAAIVAATAIAASAT) is fusion peptide. 2 N-linked (GlcNAc...) asparagine; by host glycosylation sites follow: Asn-483 and Asn-490. The interval 498–513 (LIERQIKILYAMILQT) is immunosuppression. Residues Asn-550 and Asn-557 are each glycosylated (N-linked (GlcNAc...) asparagine; by host). Coiled-coil stretches lie at residues 576–624 (ILTT…SIIK) and 663–699 (KKFH…YYKQ). The chain crosses the membrane as a helical span at residues 615 to 635 (IPGLGASIIKYIVMFLLIYLL). The Cytoplasmic portion of the chain corresponds to 636-859 (LTSSPKILRA…TSHVSMPQYV (224 aa)).

As to quaternary structure, the mature envelope protein (Env) consists of a trimer of SU-TM heterodimers attached by noncovalent interactions or by a labile interchain disulfide bond. In terms of processing, specific enzymatic cleavages in vivo yield mature proteins. Envelope glycoproteins are synthesized as an inactive precursor that is N-glycosylated and processed likely by host cell furin or by a furin-like protease in the Golgi to yield the mature SU and TM proteins. The cleavage site between SU and TM requires the minimal sequence [KR]-X-[KR]-R.

Its subcellular location is the virion membrane. The protein localises to the host cell membrane. The surface protein (SU) attaches the virus to the host cell by binding to its receptor. This interaction triggers the refolding of the transmembrane protein (TM) and is thought to activate its fusogenic potential by unmasking its fusion peptide. Fusion occurs at the host cell plasma membrane. In terms of biological role, the transmembrane protein (TM) acts as a class I viral fusion protein. Under the current model, the protein has at least 3 conformational states: pre-fusion native state, pre-hairpin intermediate state, and post-fusion hairpin state. During viral and target cell membrane fusion, the coiled coil regions (heptad repeats) assume a trimer-of-hairpins structure, positioning the fusion peptide in close proximity to the C-terminal region of the ectodomain. The formation of this structure appears to drive apposition and subsequent fusion of viral and target cell membranes. Membranes fusion leads to delivery of the nucleocapsid into the cytoplasm. The protein is Envelope glycoprotein (env) of Equus asinus (Donkey).